The primary structure comprises 152 residues: Protein SprT-like (152 aa).

One can recognise a SprT-like domain in the interval 9 to 149; the sequence is LQKLTETISL…CGKCNGKLKE (141 aa). A Zn(2+)-binding site is contributed by histidine 70. Glutamate 71 is a catalytic residue. Histidine 74 contacts Zn(2+).

The protein belongs to the SprT family. The cofactor is Zn(2+).

It localises to the cytoplasm. This chain is Protein SprT-like, found in Staphylococcus saprophyticus subsp. saprophyticus (strain ATCC 15305 / DSM 20229 / NCIMB 8711 / NCTC 7292 / S-41).